Reading from the N-terminus, the 120-residue chain is NAD(P)H-quinone oxidoreductase subunit 3, chloroplastic (120 aa).

Helical transmembrane passes span 9 to 29 (IFWT…SISG), 64 to 84 (MFAL…PWAM), and 88 to 108 (VLGV…VVGL).

This sequence belongs to the complex I subunit 3 family. As to quaternary structure, NDH is composed of at least 16 different subunits, 5 of which are encoded in the nucleus.

It is found in the plastid. The protein resides in the chloroplast thylakoid membrane. It carries out the reaction a plastoquinone + NADH + (n+1) H(+)(in) = a plastoquinol + NAD(+) + n H(+)(out). It catalyses the reaction a plastoquinone + NADPH + (n+1) H(+)(in) = a plastoquinol + NADP(+) + n H(+)(out). Its function is as follows. NDH shuttles electrons from NAD(P)H:plastoquinone, via FMN and iron-sulfur (Fe-S) centers, to quinones in the photosynthetic chain and possibly in a chloroplast respiratory chain. The immediate electron acceptor for the enzyme in this species is believed to be plastoquinone. Couples the redox reaction to proton translocation, and thus conserves the redox energy in a proton gradient. The protein is NAD(P)H-quinone oxidoreductase subunit 3, chloroplastic of Hordeum vulgare (Barley).